Here is a 662-residue protein sequence, read N- to C-terminus: Potassium channel KAT3 (662 aa).

Topologically, residues 1-90 (MSTTTTEARS…HFDRRYRLWE (90 aa)) are cytoplasmic. Residues 91 to 111 (LFLVILVGYSAWASLFELAFE) form a helical membrane-spanning segment. Over 112-118 (KAAEGAL) the chain is Extracellular. The helical transmembrane segment at 119–139 (LTIDLVVDFFFAVDIILTFFV) threads the bilayer. The Cytoplasmic portion of the chain corresponds to 140 to 163 (SYLDNTTYLNVTDHKLIAKRYLKS). A helical transmembrane segment spans residues 164 to 184 (VAFVMDVASTLPIQFIYKTIT). The Extracellular portion of the chain corresponds to 185-194 (GDVGRGQAFG). The helical; Voltage-sensor transmembrane segment at 195–215 (FLNLLRLWRLRRVAELFKRLE) threads the bilayer. The Cytoplasmic segment spans residues 216 to 229 (KDAHFNYFVIRVIK). A helical transmembrane segment spans residues 230–250 (LLCVTIFWIHLAGCILYWIAY). At 251–277 (HYPRPTDTWIGSQVEDFKERSVWLGYT) the chain is on the extracellular side. The segment at residues 278–297 (YSMYWSIVTLTTVGYGDLHA) is an intramembrane region (pore-forming). The Extracellular segment spans residues 298–301 (VNSR). Residues 302-322 (EKTFNMFYMLFNIGLTSYIIG) traverse the membrane as a helical segment. Residues 323-662 (IMTNLVVHGA…LRENDHLYIF (340 aa)) are Cytoplasmic-facing. 406–527 (LFKGFPEGLL…MIIANFMTYL (122 aa)) is an a nucleoside 3',5'-cyclic phosphate binding site. Positions 528-558 (KGLNDELKKEIPFLRDLLDDADAQVQETVQS) form a coiled coil. One can recognise a KHA domain in the interval 591-662 (RVIIHGQAPP…LRENDHLYIF (72 aa)).

It belongs to the potassium channel family. Plant (TC 1.A.1.4) subfamily. In terms of assembly, the potassium channel is probably composed of a homo- or heterotetrameric complex of pore-forming subunits. May interact with AKT1 and AKT2. Interacts with SLAC1. As to expression, expressed predominantly in root hairs and root endodermis and, at a lower level, in leaf nodes, trichomes, and hydathodes.

It is found in the membrane. Probable modulatory (alpha) subunit of inward-rectifying potassium channels. Could mediate potassium uptake from the soil solution by plant roots in association with AKT1. In Arabidopsis thaliana (Mouse-ear cress), this protein is Potassium channel KAT3 (KAT3).